Reading from the N-terminus, the 211-residue chain is Urease accessory protein UreE (211 aa).

The segment at 134–211 (FDPEGGAYAP…DHHGHGHEHK (78 aa)) is disordered. Basic and acidic residues predominate over residues 147 to 202 (PSHDHAGHDHAHDSHAHHDHDHGKHAQHDHGKHDHAHHDHAAHDDHHVHDEHCGHD).

The protein belongs to the UreE family.

It is found in the cytoplasm. Its function is as follows. Involved in urease metallocenter assembly. Binds nickel. Probably functions as a nickel donor during metallocenter assembly. The protein is Urease accessory protein UreE of Rhodopseudomonas palustris (strain BisB18).